The following is a 735-amino-acid chain: Catalase-peroxidase (735 aa).

Residues 97-220 (WHAAGTYRIG…LAAVQMGLIY (124 aa)) constitute a cross-link (tryptophyl-tyrosyl-methioninium (Trp-Tyr) (with M-246)). Histidine 98 serves as the catalytic Proton acceptor. A cross-link (tryptophyl-tyrosyl-methioninium (Tyr-Met) (with W-97)) is located at residues 220–246 (YVNPEGPNGKPDPMAAAHDIRETFGRM). Histidine 261 is a binding site for heme b. The segment at 342–362 (AHQWTPKNPEAASTVPDAHDP) is disordered.

Belongs to the peroxidase family. Peroxidase/catalase subfamily. As to quaternary structure, homodimer or homotetramer. The cofactor is heme b. In terms of processing, formation of the three residue Trp-Tyr-Met cross-link is important for the catalase, but not the peroxidase activity of the enzyme.

It carries out the reaction H2O2 + AH2 = A + 2 H2O. The enzyme catalyses 2 H2O2 = O2 + 2 H2O. Functionally, bifunctional enzyme with both catalase and broad-spectrum peroxidase activity. This Gloeobacter violaceus (strain ATCC 29082 / PCC 7421) protein is Catalase-peroxidase.